The sequence spans 416 residues: Glutamate dehydrogenase A2 (416 aa).

Residue K105 is part of the active site.

This sequence belongs to the Glu/Leu/Phe/Val dehydrogenases family. In terms of assembly, homohexamer.

The sequence is that of Glutamate dehydrogenase A2 (gdhA2) from Halobacterium salinarum (strain ATCC 700922 / JCM 11081 / NRC-1) (Halobacterium halobium).